We begin with the raw amino-acid sequence, 181 residues long: Protein Syd (181 aa).

This sequence belongs to the Syd family.

It is found in the cell inner membrane. Functionally, interacts with the SecY protein in vivo. May bind preferentially to an uncomplexed state of SecY, thus functioning either as a chelating agent for excess SecY in the cell or as a regulatory factor that negatively controls the translocase function. This chain is Protein Syd, found in Escherichia coli (strain K12 / DH10B).